We begin with the raw amino-acid sequence, 150 residues long: Large ribosomal subunit protein uL15 (150 aa).

Positions 1–57 are disordered; sequence MSLTLQSLKPQKGARRRKMRKGRGIAAGQGASCGFGMRGQKSRSGRPTRPGFEGGQM. Basic residues predominate over residues 12–23; sequence KGARRRKMRKGR. Residues 25-37 show a composition bias toward gly residues; it reads IAAGQGASCGFGM.

The protein belongs to the universal ribosomal protein uL15 family. As to quaternary structure, part of the 50S ribosomal subunit.

In terms of biological role, binds to the 23S rRNA. This is Large ribosomal subunit protein uL15 from Synechococcus sp. (strain RCC307).